The chain runs to 362 residues: Heme A synthase (362 aa).

5 helical membrane-spanning segments follow: residues 12 to 32 (AVRI…LVGG), 102 to 122 (VIGA…DLGG), 128 to 148 (LWII…MVAS), 159 to 179 (VRLA…VWTL), and 198 to 218 (AAVL…VAGL). H262 serves as a coordination point for heme. 3 helical membrane passes run 264-281 (MLAY…IDAW), 289-309 (GALA…VTLL), and 312-332 (VPIG…TLAV). Position 320 (H320) interacts with heme.

The protein belongs to the COX15/CtaA family. Type 2 subfamily. In terms of assembly, interacts with CtaB. Heme b is required as a cofactor.

The protein localises to the cell membrane. The catalysed reaction is Fe(II)-heme o + 2 A + H2O = Fe(II)-heme a + 2 AH2. The protein operates within porphyrin-containing compound metabolism; heme A biosynthesis; heme A from heme O: step 1/1. Functionally, catalyzes the conversion of heme O to heme A by two successive hydroxylations of the methyl group at C8. The first hydroxylation forms heme I, the second hydroxylation results in an unstable dihydroxymethyl group, which spontaneously dehydrates, resulting in the formyl group of heme A. The chain is Heme A synthase from Rhodopseudomonas palustris (strain BisB18).